The sequence spans 275 residues: Ditrans,polycis-undecaprenyl-diphosphate synthase ((2E,6E)-farnesyl-diphosphate specific) (275 aa).

The active site involves Asp45. Asp45 provides a ligand contact to Mg(2+). Substrate contacts are provided by residues 46–49 (GNGR), Trp50, Arg58, His62, and 90–92 (SSE). Residue Asn93 is the Proton acceptor of the active site. Substrate-binding positions include Trp94, Arg96, Arg213, and 219-221 (RIS). Glu232 is a Mg(2+) binding site.

The protein belongs to the UPP synthase family. In terms of assembly, homodimer. It depends on Mg(2+) as a cofactor.

It carries out the reaction 8 isopentenyl diphosphate + (2E,6E)-farnesyl diphosphate = di-trans,octa-cis-undecaprenyl diphosphate + 8 diphosphate. Catalyzes the sequential condensation of isopentenyl diphosphate (IPP) with (2E,6E)-farnesyl diphosphate (E,E-FPP) to yield (2Z,6Z,10Z,14Z,18Z,22Z,26Z,30Z,34E,38E)-undecaprenyl diphosphate (di-trans,octa-cis-UPP). UPP is the precursor of glycosyl carrier lipid in the biosynthesis of bacterial cell wall polysaccharide components such as peptidoglycan and lipopolysaccharide. This Shewanella oneidensis (strain ATCC 700550 / JCM 31522 / CIP 106686 / LMG 19005 / NCIMB 14063 / MR-1) protein is Ditrans,polycis-undecaprenyl-diphosphate synthase ((2E,6E)-farnesyl-diphosphate specific).